The sequence spans 532 residues: Cytochrome P450 12b1, mitochondrial (532 aa).

Heme is bound at residue Cys-480.

Belongs to the cytochrome P450 family. The cofactor is heme.

It localises to the mitochondrion. Functionally, probably involved in steroid hormones biosynthesis. The sequence is that of Cytochrome P450 12b1, mitochondrial (Cyp12b1) from Drosophila acanthoptera (Fruit fly).